Reading from the N-terminus, the 377-residue chain is Trans-enoyl reductase FMN2 (377 aa).

An Enoyl reductase (ER) domain is found at 7–370; it reads NASGGYCLNS…DGVIRGKKLV (364 aa). The segment at 143-173 is disordered; that stretch reads LSDMTGNGRSNGYTNGHTNGHTNGHSKGEEE. The segment covering 144-155 has biased composition (polar residues); sequence SDMTGNGRSNGY. Residues 156 to 167 show a composition bias toward low complexity; sequence TNGHTNGHTNGH. NADP(+) is bound by residues 186–189, 209–212, Tyr-227, and 274–275; these read ASAS, SPAN, and LD.

This sequence belongs to the zinc-containing alcohol dehydrogenase family.

It functions in the pathway secondary metabolite biosynthesis. In terms of biological role, trans-enoyl reductase; part of the gene cluster that mediates the biosynthesis of fusamarins, isocoumarin derivatives that show moderate cytotoxicity with IC(50) values between 1 and 50 uM. The polyketide synthase FMN1 probably synthesizes two different polyketides, a tetra- and a pentaketide, containinga varying number of double bonds depending on the selective actions of the trans-enoyl reductase FMN2. Chain fusion will presumably be mediated by the KS domain before finally offloading is catalyzed by the alpha/beta hydrolase fold enzyme FMN3. The polypeptide is Trans-enoyl reductase FMN2 (Fusarium mangiferae (Mango malformation disease fungus)).